Here is a 487-residue protein sequence, read N- to C-terminus: Protein nucleotidyltransferase YdiU (487 aa).

ATP is bound by residues Gly-90, Gly-92, Arg-93, Lys-113, Asp-125, Gly-126, Arg-176, and Arg-183. Asp-252 acts as the Proton acceptor in catalysis. Positions 253 and 262 each coordinate Mg(2+). Residue Asp-262 coordinates ATP.

The protein belongs to the SELO family. The cofactor is Mg(2+). It depends on Mn(2+) as a cofactor.

It carries out the reaction L-seryl-[protein] + ATP = 3-O-(5'-adenylyl)-L-seryl-[protein] + diphosphate. It catalyses the reaction L-threonyl-[protein] + ATP = 3-O-(5'-adenylyl)-L-threonyl-[protein] + diphosphate. The catalysed reaction is L-tyrosyl-[protein] + ATP = O-(5'-adenylyl)-L-tyrosyl-[protein] + diphosphate. The enzyme catalyses L-histidyl-[protein] + UTP = N(tele)-(5'-uridylyl)-L-histidyl-[protein] + diphosphate. It carries out the reaction L-seryl-[protein] + UTP = O-(5'-uridylyl)-L-seryl-[protein] + diphosphate. It catalyses the reaction L-tyrosyl-[protein] + UTP = O-(5'-uridylyl)-L-tyrosyl-[protein] + diphosphate. Nucleotidyltransferase involved in the post-translational modification of proteins. It can catalyze the addition of adenosine monophosphate (AMP) or uridine monophosphate (UMP) to a protein, resulting in modifications known as AMPylation and UMPylation. The sequence is that of Protein nucleotidyltransferase YdiU from Pseudomonas fluorescens (strain ATCC BAA-477 / NRRL B-23932 / Pf-5).